The primary structure comprises 307 residues: Ribosomal RNA small subunit methyltransferase H (307 aa).

Residues 33-35 (AGH), Asp-52, Leu-83, Asp-97, and Gln-104 each bind S-adenosyl-L-methionine.

It belongs to the methyltransferase superfamily. RsmH family.

Its subcellular location is the cytoplasm. The catalysed reaction is cytidine(1402) in 16S rRNA + S-adenosyl-L-methionine = N(4)-methylcytidine(1402) in 16S rRNA + S-adenosyl-L-homocysteine + H(+). In terms of biological role, specifically methylates the N4 position of cytidine in position 1402 (C1402) of 16S rRNA. This chain is Ribosomal RNA small subunit methyltransferase H, found in Sulfurovum sp. (strain NBC37-1).